We begin with the raw amino-acid sequence, 274 residues long: Serine/threonine-protein kinase 1 (274 aa).

One can recognise a Protein kinase domain in the interval 17-265 (ARTALHLVNG…YEVIQKNTYW (249 aa)). Residues 23-31 (LVNGKFGKV) and K46 contribute to the ATP site. D133 serves as the catalytic Proton acceptor.

This sequence belongs to the protein kinase superfamily. Ser/Thr protein kinase family.

It catalyses the reaction L-seryl-[protein] + ATP = O-phospho-L-seryl-[protein] + ADP + H(+). It carries out the reaction L-threonyl-[protein] + ATP = O-phospho-L-threonyl-[protein] + ADP + H(+). Its function is as follows. In vitro, can phosphorylate histone H1. This Lymantria dispar multicapsid nuclear polyhedrosis virus (LdMNPV) protein is Serine/threonine-protein kinase 1 (PK1).